We begin with the raw amino-acid sequence, 876 residues long: GATOR2 complex protein MIOS (876 aa).

WD repeat units lie at residues 59–101 (SDTP…NSKS), 112–156 (KHAR…SPEA), 182–222 (GQND…QKTF), 224–262 (NTKA…KPVF), 266–307 (EQPK…MPFG), and 400–440 (RAQS…KQYT). A C4-type zinc finger spans residues 738–784 (VSCNFCGKSISYSCSAMPHQGRGFSQYGVSGSPTKSKVTSCPGCRKP). Positions 740, 743, 778, 781, 791, 830, 833, 835, 838, 841, 852, 857, and 861 each coordinate Zn(2+). An RING-type; atypical zinc finger spans residues 785-866 (LPRCALCLMN…CTCKCMQLDT (82 aa)).

Belongs to the WD repeat mio family. Component of the GATOR2 subcomplex, composed of MIOS, SEC13, SEH1L, WDR24 and WDR59. The GATOR2 complex interacts with CASTOR1 and CASTOR2; the interaction is negatively regulated by arginine. The GATOR2 complex interacts with SESN1, SESN2 and SESN3; the interaction is negatively regulated by amino acids. Interacts with SAR1; the interaction is direct, disrupted by leucine and mediates the interaction of SAR1 with the GATOR2 complex to negatively regulate the TORC1 signaling upon leucine deprivation.

The protein localises to the lysosome membrane. The GATOR2 complex is negatively regulated by the upstream amino acid sensors CASTOR1 and SESN2, which sequester the GATOR2 complex in absence of amino acids. In the presence of abundant amino acids, GATOR2 is released from CASTOR1 and SESN2 and activated. In terms of biological role, as a component of the GATOR2 complex, functions as an activator of the amino acid-sensing branch of the mTORC1 signaling pathway. The GATOR2 complex indirectly activates mTORC1 through the inhibition of the GATOR1 subcomplex. GATOR2 probably acts as an E3 ubiquitin-protein ligase toward GATOR1. In the presence of abundant amino acids, the GATOR2 complex mediates ubiquitination of the NPRL2 core component of the GATOR1 complex, leading to GATOR1 inactivation. In the absence of amino acids, GATOR2 is inhibited, activating the GATOR1 complex. Within the GATOR2 complex, MIOS is required to prevent autoubiquitination of WDR24, the catalytic subunit of the complex. This is GATOR2 complex protein MIOS from Danio rerio (Zebrafish).